Consider the following 633-residue polypeptide: Leucine-rich repeat and IQ domain-containing protein 3 (633 aa).

3 LRR repeats span residues 51–72, 73–94, and 98–119; these read SLRV…QSCK, KLIK…NFWS, and NLKL…CVLS. Residues 132–179 enclose the LRRCT domain; the sequence is CPVSLKKGYRHVLVNSIWPLKALDHHVISDEEIIQNWRLPERFKTFSP. An IQ domain is found at 215-244; the sequence is HNSPVLIIQRWIRGFIVRKHLSPYFKHKKH. Positions 324 to 343 are disordered; sequence SKQPRHHIHKGQKAMKAESE. Residues 325 to 336 show a composition bias toward basic residues; the sequence is KQPRHHIHKGQK. Positions 556-617 form a coiled coil; sequence IEKWEEQKYK…AKVEYIKTFY (62 aa).

The sequence is that of Leucine-rich repeat and IQ domain-containing protein 3 (Lrriq3) from Mus musculus (Mouse).